Here is a 456-residue protein sequence, read N- to C-terminus: Tyrosinase-like protein (456 aa).

A signal peptide spans 1 to 22; the sequence is MNTMTLLGKVFLLQFLIGVGFC. 6 residues coordinate Cu cation: His145, His154, His163, His295, His299, and His322.

This sequence belongs to the tyrosinase family. Cu(2+) is required as a cofactor. Prismatic layer of shell (at protein level).

Its subcellular location is the secreted. The polypeptide is Tyrosinase-like protein (Pinctada maxima (Silver-lipped pearl oyster)).